The chain runs to 223 residues: UPF0319 protein VPA1584 (223 aa).

The signal sequence occupies residues 1–21; that stretch reads MKLIKPLTCALALAMSGMAFA.

The protein belongs to the UPF0319 family.

In Vibrio parahaemolyticus serotype O3:K6 (strain RIMD 2210633), this protein is UPF0319 protein VPA1584.